A 714-amino-acid polypeptide reads, in one-letter code: Palmitoyltransferase ZDHHC5 (714 aa).

Topologically, residues 1-13 (MPAESAKRFKPSK) are cytoplasmic. Residues 14–34 (YVPVSAAAIFLVGATTLFFAF) traverse the membrane as a helical segment. Topologically, residues 35–52 (TCPGLSLSVSPAVPVYNA) are extracellular. The helical transmembrane segment at 53–73 (VVFLFVLANFSMATFMDPGVF) threads the bilayer. Over 74 to 148 (PRAEEDEDKE…NCIGRRNYRY (75 aa)) the chain is Cytoplasmic. Tyr91 carries the post-translational modification Phosphotyrosine. Residues 104–154 (KWCATCRFYRPPRCSHCSVCDNCVEEFDHHCPWVNNCIGRRNYRYFFLFLL) form the DHHC domain. Residue Cys134 is the S-palmitoyl cysteine intermediate of the active site. The helical transmembrane segment at 149 to 169 (FFLFLLSLTAHITGVFGFGLL) threads the bilayer. The Extracellular segment spans residues 170-191 (YVLYHMEELSGVRTAVTMAVMC). Residues 192 to 212 (VAGLFFIPVAGLTGFHVVLVA) traverse the membrane as a helical segment. Residues 213-714 (RGRTTNEQVT…VGGTTYEISV (502 aa)) lie on the Cytoplasmic side of the membrane. Ser247 is subject to Phosphoserine. Residues 289–714 (GELRRTKSKG…VGGTTYEISV (426 aa)) are disordered. The residue at position 294 (Thr294) is a Phosphothreonine. A phosphoserine mark is found at Ser296 and Ser299. Residue Thr303 is modified to Phosphothreonine. Phosphoserine is present on Ser345. A phosphothreonine mark is found at Thr348 and Thr350. Residues 359-373 (SSSSASAAMPHSSSA) are compositionally biased toward low complexity. A phosphoserine mark is found at Ser380, Ser398, Ser406, and Ser409. Residues 388 to 398 (AESSRQPSYRS) are compositionally biased toward polar residues. At Thr411 the chain carries Phosphothreonine. A compositionally biased stretch (low complexity) spans 422–432 (SSGSRSSSLKS). Residues Ser425, Ser429, and Ser432 each carry the phosphoserine modification. Phosphothreonine is present on Thr436. Polar residues predominate over residues 445 to 478 (SIRSEGTTSTSYKSLANQTRNGSLSYDSLLTPSD). Phosphoserine is present on residues Ser529 and Ser554. Arg616 carries the omega-N-methylarginine modification. Phosphoserine is present on Ser620. Phosphothreonine is present on Thr658. Positions 667–678 (TAYSKSNGQPKS) are enriched in polar residues. Residues 683-692 (PPGPGQPPLS) are compositionally biased toward pro residues. The residue at position 693 (Ser693) is a Phosphoserine. Arg696 bears the Omega-N-methylarginine mark.

The protein belongs to the DHHC palmitoyltransferase family. ERF2/ZDHHC9 subfamily. Phosphorylation regulates association with endocytic proteins and its subcellular localization. Phosphorylation by LYN during fatty acid uptake leads to inactivation of the activity. In terms of processing, autopalmitoylated. Palmitoylation of the C-terminal tail regulates stimulation-dependent plasma membrane motility.

It localises to the cell membrane. It catalyses the reaction L-cysteinyl-[protein] + hexadecanoyl-CoA = S-hexadecanoyl-L-cysteinyl-[protein] + CoA. Palmitoyltransferase that catalyzes the addition of palmitate onto various protein substrates such as CTNND2, CD36, GSDMD, NLRP3, NOD1, NOD2, STAT3 and S1PR1 thus plays a role in various biological processes including cell adhesion, inflammation, fatty acid uptake, bacterial sensing or cardiac functions. Plays an important role in the regulation of synapse efficacy by mediating palmitoylation of delta-catenin/CTNND2, thereby increasing synaptic delivery and surface stabilization of alpha-amino-3-hydroxy-5-methyl-4-isoxazole propionic acid receptors (AMPARs). Under basal conditions, remains at the synaptic membrane through FYN-mediated phosphorylation that prevents association with endocytic proteins. Neuronal activity enhances the internalization and trafficking of DHHC5 from spines to dendritic shafts where it palmitoylates delta-catenin/CTNND2. Regulates cell adhesion at the plasma membrane by palmitoylating GOLGA7B and DSG2. Plays a role in innate immune response by mediating the palmitoylation of NOD1 and NOD2 and their proper recruitment to the bacterial entry site and phagosomes. Also participates in fatty acid uptake by palmitoylating CD36 and thereby targeting it to the plasma membrane. Upon binding of fatty acids to CD36, gets phosphorylated by LYN leading to inactivation and subsequent CD36 caveolar endocytosis. Controls oligodendrocyte development by catalyzing STAT3 palmitoylation. Acts as a regulator of inflammatory response by mediating palmitoylation of NLRP3 and GSDMD. Palmitoylates NLRP3 to promote inflammasome assembly and activation. Activates pyroptosis by catalyzing palmitoylation of gasdermin-D (GSDMD), thereby promoting membrane translocation and pore formation of GSDMD. The sequence is that of Palmitoyltransferase ZDHHC5 (ZDHHC5) from Bos taurus (Bovine).